We begin with the raw amino-acid sequence, 154 residues long: Putative pre-16S rRNA nuclease (154 aa).

It belongs to the YqgF nuclease family.

Its subcellular location is the cytoplasm. In terms of biological role, could be a nuclease involved in processing of the 5'-end of pre-16S rRNA. This chain is Putative pre-16S rRNA nuclease, found in Rickettsia akari (strain Hartford).